Here is a 174-residue protein sequence, read N- to C-terminus: Shikimate kinase (174 aa).

Residue 10 to 15 (GSGKTA) participates in ATP binding. T14 lines the Mg(2+) pocket. Positions 32, 56, and 78 each coordinate substrate. R118 provides a ligand contact to ATP. Residue R137 coordinates substrate. An ATP-binding site is contributed by R154.

The protein belongs to the shikimate kinase family. As to quaternary structure, monomer. Requires Mg(2+) as cofactor.

The protein localises to the cytoplasm. It catalyses the reaction shikimate + ATP = 3-phosphoshikimate + ADP + H(+). It participates in metabolic intermediate biosynthesis; chorismate biosynthesis; chorismate from D-erythrose 4-phosphate and phosphoenolpyruvate: step 5/7. Functionally, catalyzes the specific phosphorylation of the 3-hydroxyl group of shikimic acid using ATP as a cosubstrate. The sequence is that of Shikimate kinase from Symbiobacterium thermophilum (strain DSM 24528 / JCM 14929 / IAM 14863 / T).